The primary structure comprises 253 residues: tRNA pseudouridine synthase A (253 aa).

Aspartate 52 acts as the Nucleophile in catalysis. Tyrosine 111 is a substrate binding site.

This sequence belongs to the tRNA pseudouridine synthase TruA family. In terms of assembly, homodimer.

It carries out the reaction uridine(38/39/40) in tRNA = pseudouridine(38/39/40) in tRNA. Formation of pseudouridine at positions 38, 39 and 40 in the anticodon stem and loop of transfer RNAs. This Methylobacterium radiotolerans (strain ATCC 27329 / DSM 1819 / JCM 2831 / NBRC 15690 / NCIMB 10815 / 0-1) protein is tRNA pseudouridine synthase A.